The sequence spans 416 residues: Glutamyl-tRNA reductase (416 aa).

Residues 49–52, S105, 110–112, and Q116 each bind substrate; these read TCNR and EPQ. The active-site Nucleophile is the C50. 185-190 contributes to the NADP(+) binding site; that stretch reads GAGETI.

The protein belongs to the glutamyl-tRNA reductase family. As to quaternary structure, homodimer.

It catalyses the reaction (S)-4-amino-5-oxopentanoate + tRNA(Glu) + NADP(+) = L-glutamyl-tRNA(Glu) + NADPH + H(+). Its pathway is porphyrin-containing compound metabolism; protoporphyrin-IX biosynthesis; 5-aminolevulinate from L-glutamyl-tRNA(Glu): step 1/2. Its function is as follows. Catalyzes the NADPH-dependent reduction of glutamyl-tRNA(Glu) to glutamate 1-semialdehyde (GSA). The protein is Glutamyl-tRNA reductase of Shewanella piezotolerans (strain WP3 / JCM 13877).